Here is a 347-residue protein sequence, read N- to C-terminus: MARFWVCVAGAGFFLAFLVLHSRFCGSPVLRNFTFAVSWRTEKILYRLDVGWPKHPEYFTGTTFCVAVDSLNGLVYIGQRGDNIPKILVFTEDGYFLRAWNYTVDTPHGIFAASTLYEQSVWITDVGSGFFGHTVKKYSSFGDLVQVLGTPGKKGTSLNPLQFDNPAELYVEDTGDIYIVDGDGGLNNRLIKLSQDFMILWLHGENGTGPAKFNIPHSVTLDSAGRVWVADRGNKRIQVFDKDTGEWLGAWNNCFTEEGPSSVRFTPDGKYLIVAQLNLSRLSVVAAPPVGSIGECSVISTIQLADQVLPHLLEVDRKTGAVYVAEIGAKQVQKYVPLNSYVPSFGS.

The N-terminal stretch at 1–25 (MARFWVCVAGAGFFLAFLVLHSRFC) is a signal peptide. Asn32 carries N-linked (GlcNAc...) asparagine glycosylation. An NHL 1 repeat occupies 47–93 (RLDVGWPKHPEYFTGTTFCVAVDSLNGLVYIGQRGDNIPKILVFTED). The N-linked (GlcNAc...) asparagine glycan is linked to Asn101. NHL repeat units follow at residues 150-196 (TPGK…LSQD) and 200-243 (LWLH…FDKD). N-linked (GlcNAc...) asparagine glycosylation is found at Asn206 and Asn278. Residues 294-338 (GECSVISTIQLADQVLPHLLEVDRKTGAVYVAEIGAKQVQKYVPL) form an NHL 4 repeat.

Its subcellular location is the secreted. The polypeptide is NHL repeat-containing protein 3 (NHLRC3) (Homo sapiens (Human)).